Consider the following 315-residue polypeptide: Probable cell division protein kinase ECU11_1290 (315 aa).

In terms of domain architecture, Protein kinase spans 13 to 294; that stretch reads YEKVCRISSG…ASQGLCSGFV (282 aa). Residues 19–27 and Lys-42 each bind ATP; that span reads ISSGSFGNV. Residue Asp-138 is the Proton acceptor of the active site.

This sequence belongs to the protein kinase superfamily. CMGC Ser/Thr protein kinase family. CDC2/CDKX subfamily.

The protein localises to the nucleus. It catalyses the reaction L-seryl-[protein] + ATP = O-phospho-L-seryl-[protein] + ADP + H(+). It carries out the reaction L-threonyl-[protein] + ATP = O-phospho-L-threonyl-[protein] + ADP + H(+). Its function is as follows. May play a role in the control of the eukaryotic cell cycle. The protein is Probable cell division protein kinase ECU11_1290 of Encephalitozoon cuniculi (strain GB-M1) (Microsporidian parasite).